Here is a 224-residue protein sequence, read N- to C-terminus: Homeobox protein Hox-B6 (224 aa).

Residues 127–132 (VYPWMQ) carry the Antp-type hexapeptide motif. The segment at residues 146–205 (GRRGRQTYTRYQTLELEKEFHYNRYLTRRRRIEIAHALCLTERQIKIWFQNRRMKWKKES) is a DNA-binding region (homeobox). Phosphoserine is present on Ser214.

It belongs to the Antp homeobox family.

The protein localises to the nucleus. In terms of biological role, sequence-specific transcription factor which is part of a developmental regulatory system that provides cells with specific positional identities on the anterior-posterior axis. This Mus musculus (Mouse) protein is Homeobox protein Hox-B6 (Hoxb6).